We begin with the raw amino-acid sequence, 213 residues long: MSDSSSVPVDFVLNFSTAALHAWNGLSLFLIVFISWFISGLTQAKTKMDRVVLCWWALTGLIHVFQEGYYVFTPDLFKDDSPNFMAEIWKEYSKGDSRYATRHTSVLTIESMASVVLGPLSLLAAYALAKAKSYNYILQFGVSIAQLYGACLYFLSAFLEGDNFASSPYFYWAYYVGQSSIWVIVPALIAIRCWKKINAICYLQDKKNKTKVR.

The next 5 helical transmembrane spans lie at 18–38 (AALHAWNGLSLFLIVFISWFI), 52–72 (VLCWWALTGLIHVFQEGYYVF), 109–129 (IESMASVVLGPLSLLAAYALA), 137–157 (ILQFGVSIAQLYGACLYFLSA), and 171–191 (YWAYYVGQSSIWVIVPALIAI). Positions 48–190 (MDRVVLCWWA…IWVIVPALIA (143 aa)) constitute an EXPERA domain.

It belongs to the EBP family. In terms of tissue distribution, mainly expressed in petioles.

The protein resides in the membrane. It carries out the reaction 7,8-epoxymelianol = isomeliandiol. It functions in the pathway secondary metabolite biosynthesis; terpenoid biosynthesis. In terms of biological role, isomerase involved in the biosynthesis of limonoids triterpene natural products such as azadirachtin, an antifeedant widely used as bioinsecticide, and possessing many medicinal applications including anti-tumoral, anti-malarial, anti-rheumatic, antibacterial, anti-inflammatory, anti-pyretic and diuretic effects. Catalyzes the conversion of 7,8-epoxymelianol to isomeliandiol via skeletal rearrangements. The chain is Isomeliandiol synthase MOI2 from Melia azedarach (Chinaberry tree).